The chain runs to 235 residues: Small ribosomal subunit protein uS2c (235 aa).

Belongs to the universal ribosomal protein uS2 family.

The protein resides in the plastid. It localises to the chloroplast. This chain is Small ribosomal subunit protein uS2c (rps2), found in Huperzia lucidula (Shining clubmoss).